Reading from the N-terminus, the 722-residue chain is Polyribonucleotide nucleotidyltransferase (722 aa).

Positions 487 and 493 each coordinate Mg(2+). Residues 554–613 form the KH domain; it reads PRMVSFKIHPDKIREVIGKGGATIQALTKETGCSIDIKDDGTVTIASTSAEGMAEAKARI. One can recognise an S1 motif domain in the interval 623-691; sequence GKIYEGPVVK…ERGRLRLSLK (69 aa).

It belongs to the polyribonucleotide nucleotidyltransferase family. Requires Mg(2+) as cofactor.

It is found in the cytoplasm. It carries out the reaction RNA(n+1) + phosphate = RNA(n) + a ribonucleoside 5'-diphosphate. Its function is as follows. Involved in mRNA degradation. Catalyzes the phosphorolysis of single-stranded polyribonucleotides processively in the 3'- to 5'-direction. The polypeptide is Polyribonucleotide nucleotidyltransferase (Polynucleobacter asymbioticus (strain DSM 18221 / CIP 109841 / QLW-P1DMWA-1) (Polynucleobacter necessarius subsp. asymbioticus)).